The sequence spans 331 residues: L-lactate dehydrogenase A chain (331 aa).

Residues 29–57 (GMVGMASAISILLKDLCDELAMVDVMEDK) and arginine 98 each bind NAD(+). Residues arginine 105, asparagine 137, and arginine 168 each coordinate substrate. Residue asparagine 137 coordinates NAD(+). The active-site Proton acceptor is the histidine 192. Threonine 247 is a binding site for substrate.

This sequence belongs to the LDH/MDH superfamily. LDH family. Homotetramer.

The protein resides in the cytoplasm. The catalysed reaction is (S)-lactate + NAD(+) = pyruvate + NADH + H(+). The protein operates within fermentation; pyruvate fermentation to lactate; (S)-lactate from pyruvate: step 1/1. Its function is as follows. Interconverts simultaneously and stereospecifically pyruvate and lactate with concomitant interconversion of NADH and NAD(+). The protein is L-lactate dehydrogenase A chain (ldha) of Chaenocephalus aceratus (Blackfin icefish).